The following is a 218-amino-acid chain: Adenylate kinase (218 aa).

10 to 15 contributes to the ATP binding site; that stretch reads GAGKGT. Residues 30–59 form an NMP region; sequence STGDMLRAAVKAGTPLGVEAKKIMDAGALV. AMP-binding positions include Thr-31, Arg-36, 57-59, 85-88, and Gln-92; these read ALV and GFPR. The segment at 122–159 is LID; it reads GRRSHTASGRTYHVKYNPPKVEGKDDVTGEPLIQREDD. ATP contacts are provided by residues Arg-123 and 132–133; that span reads TY. AMP is bound by residues Arg-156 and Arg-167. Position 203 (Gly-203) interacts with ATP.

The protein belongs to the adenylate kinase family. Monomer.

It is found in the cytoplasm. The catalysed reaction is AMP + ATP = 2 ADP. It functions in the pathway purine metabolism; AMP biosynthesis via salvage pathway; AMP from ADP: step 1/1. In terms of biological role, catalyzes the reversible transfer of the terminal phosphate group between ATP and AMP. Plays an important role in cellular energy homeostasis and in adenine nucleotide metabolism. In Polaromonas sp. (strain JS666 / ATCC BAA-500), this protein is Adenylate kinase.